The following is a 129-amino-acid chain: Ribosome-binding factor A (129 aa).

Belongs to the RbfA family. As to quaternary structure, monomer. Binds 30S ribosomal subunits, but not 50S ribosomal subunits or 70S ribosomes.

The protein resides in the cytoplasm. Functionally, one of several proteins that assist in the late maturation steps of the functional core of the 30S ribosomal subunit. Associates with free 30S ribosomal subunits (but not with 30S subunits that are part of 70S ribosomes or polysomes). Required for efficient processing of 16S rRNA. May interact with the 5'-terminal helix region of 16S rRNA. The chain is Ribosome-binding factor A from Thermomicrobium roseum (strain ATCC 27502 / DSM 5159 / P-2).